The primary structure comprises 128 residues: Translation initiation factor 5A (128 aa).

Lysine 35 bears the Hypusine mark.

Belongs to the eIF-5A family.

The protein resides in the cytoplasm. Functionally, functions by promoting the formation of the first peptide bond. This Methanocella arvoryzae (strain DSM 22066 / NBRC 105507 / MRE50) protein is Translation initiation factor 5A (eIF5A).